The chain runs to 276 residues: Small ribosomal subunit protein uS2 (276 aa).

Residues 255–276 (ASATATAAPTEAGAPEPTTDPS) form a disordered region.

Belongs to the universal ribosomal protein uS2 family.

In Mycolicibacterium paratuberculosis (strain ATCC BAA-968 / K-10) (Mycobacterium paratuberculosis), this protein is Small ribosomal subunit protein uS2.